We begin with the raw amino-acid sequence, 1026 residues long: Multidrug resistance protein MdtC (1026 aa).

The next 12 membrane-spanning stretches (helical) occupy residues 12–32 (VATL…FRLL), 333–353 (EVEQ…FLFL), 360–380 (AIPA…MYLC), 387–407 (LSLM…IVVL), 431–451 (VGFT…PLLL), 463–483 (FAVT…TLTP), 528–548 (WVLL…ISIP), 853–873 (LLLI…LYES), 875–895 (VHPL…LLAL), 897–917 (WFGA…IGIV), 953–973 (PIMM…LTSG), and 984–1004 (ITIV…TPVV).

The protein belongs to the resistance-nodulation-cell division (RND) (TC 2.A.6) family. MdtC subfamily. In terms of assembly, part of a tripartite efflux system composed of MdtA, MdtB and MdtC. MdtC forms a heteromultimer with MdtB.

It is found in the cell inner membrane. The chain is Multidrug resistance protein MdtC from Pectobacterium carotovorum subsp. carotovorum (strain PC1).